The chain runs to 572 residues: 2-isopropylmalate synthase (572 aa).

A Pyruvate carboxyltransferase domain is found at 31–305 (PIWMSTDLRD…DPGLDFSNIN (275 aa)). Positions 40, 244, 246, and 280 each coordinate Mg(2+). The tract at residues 437–572 (NATPVHYVGH…MNDATESVGV (136 aa)) is regulatory domain.

It belongs to the alpha-IPM synthase/homocitrate synthase family. LeuA type 2 subfamily. As to quaternary structure, homodimer. The cofactor is Mg(2+).

The protein localises to the cytoplasm. The catalysed reaction is 3-methyl-2-oxobutanoate + acetyl-CoA + H2O = (2S)-2-isopropylmalate + CoA + H(+). It functions in the pathway amino-acid biosynthesis; L-leucine biosynthesis; L-leucine from 3-methyl-2-oxobutanoate: step 1/4. Its function is as follows. Catalyzes the condensation of the acetyl group of acetyl-CoA with 3-methyl-2-oxobutanoate (2-ketoisovalerate) to form 3-carboxy-3-hydroxy-4-methylpentanoate (2-isopropylmalate). The chain is 2-isopropylmalate synthase from Paraburkholderia xenovorans (strain LB400).